We begin with the raw amino-acid sequence, 211 residues long: Dihydrofolate reductase (211 aa).

A DHFR domain is found at 7-210 (PIVGIVACLQ…YCFEFTLYNR (204 aa)). Residues A13 and 20–26 (GIGFRGG) contribute to the NADP(+) site. Substrate is bound at residue 34-39 (EMKYFR). NADP(+) is bound at residue 58 to 60 (RKT). R74 serves as a coordination point for substrate. Residues 80–82 (SRS) and 123–130 (GGGEVYSQ) each bind NADP(+).

The protein belongs to the dihydrofolate reductase family.

It catalyses the reaction (6S)-5,6,7,8-tetrahydrofolate + NADP(+) = 7,8-dihydrofolate + NADPH + H(+). Its pathway is cofactor biosynthesis; tetrahydrofolate biosynthesis; 5,6,7,8-tetrahydrofolate from 7,8-dihydrofolate: step 1/1. Key enzyme in folate metabolism. Catalyzes an essential reaction for de novo glycine and purine synthesis, and for DNA precursor synthesis. This chain is Dihydrofolate reductase (DFR1), found in Saccharomyces cerevisiae (strain ATCC 204508 / S288c) (Baker's yeast).